Reading from the N-terminus, the 227-residue chain is Cytidylate kinase (227 aa).

12–20 is a binding site for ATP; it reads GPSGAGKGT.

The protein belongs to the cytidylate kinase family. Type 1 subfamily.

It is found in the cytoplasm. The enzyme catalyses CMP + ATP = CDP + ADP. The catalysed reaction is dCMP + ATP = dCDP + ADP. The sequence is that of Cytidylate kinase from Shigella flexneri.